The primary structure comprises 100 residues: Integration host factor subunit alpha (100 aa).

It belongs to the bacterial histone-like protein family. As to quaternary structure, heterodimer of an alpha and a beta chain.

Functionally, this protein is one of the two subunits of integration host factor, a specific DNA-binding protein that functions in genetic recombination as well as in transcriptional and translational control. This is Integration host factor subunit alpha from Rhizorhabdus wittichii (strain DSM 6014 / CCUG 31198 / JCM 15750 / NBRC 105917 / EY 4224 / RW1) (Sphingomonas wittichii).